The sequence spans 273 residues: Type II iodothyronine deiodinase (273 aa).

The Lumenal portion of the chain corresponds to 1–9; that stretch reads MGILSVDLL. A helical; Signal-anchor for type III membrane protein transmembrane segment spans residues 10 to 34; that stretch reads ITLQILPVFFSNCLFLALYDSVILL. Topologically, residues 35-273 are cytoplasmic; it reads KHVVLLLSRS…KRUKKTRLAG (239 aa). Residue Sec133 is part of the active site. Non-standard amino acids (selenocysteine) are located at Sec133 and Sec266.

This sequence belongs to the iodothyronine deiodinase family. As to quaternary structure, predominantly monomer. Can form homodimers but homodimerization is not essential for enzyme activity. Interacts with USP20 and USP33. Interacts with MARCHF6. Ubiquitinated by MARCHF6, leading to its degradation by the proteasome. Deubiquitinated by USP20 and USP33. Isoform 1 is expressed in the lung, trachea, kidney, heart, skeletal muscle, placenta, fetal brain and several regions of the adult brain. Isoform 2 is expressed in the brain, heart, kidney and trachea.

The protein localises to the endoplasmic reticulum membrane. The catalysed reaction is 3,3',5-triiodo-L-thyronine + iodide + A + H(+) = L-thyroxine + AH2. The enzyme catalyses 3,3'-diiodo-L-thyronine + iodide + A + H(+) = 3,3',5'-triiodo-L-thyronine + AH2. It catalyses the reaction 3'-iodo-L-thyronine + iodide + A + H(+) = 3',5'-diiodo-L-thyronine + AH2. It carries out the reaction 3,3'-diiodothyronamine + iodide + A + H(+) = 3,3',5'-triiodothyronamine + AH2. The catalysed reaction is 3'-iodothyronamine + iodide + A + H(+) = 3',5'-diiodothyronamine + AH2. Plays a crucial role in the metabolism of thyroid hormones (TH) and has specific roles in TH activation and inactivation by deiodination. Catalyzes the deiodination of L-thyroxine (T4) to 3,5,3'-triiodothyronine (T3), 3,3',5'-triiodothyronine (rT3) to 3,3'-diiodothyronine (3,3'-T2) and 3',5'-diiodothyronine (3',5'-T2) to 3'-monoiodothyronine (3'-T1) via outer-ring deiodination (ORD). Catalyzes the phenolic ring deiodinations of 3,3',5'-triiodothyronamine and 3',5'- diiodothyronamine. In Homo sapiens (Human), this protein is Type II iodothyronine deiodinase (DIO2).